A 148-amino-acid polypeptide reads, in one-letter code: Large ribosomal subunit protein bL9 (148 aa).

The protein belongs to the bacterial ribosomal protein bL9 family.

In terms of biological role, binds to the 23S rRNA. This chain is Large ribosomal subunit protein bL9, found in Marinobacter nauticus (strain ATCC 700491 / DSM 11845 / VT8) (Marinobacter aquaeolei).